Reading from the N-terminus, the 118-residue chain is Putative pterin-4-alpha-carbinolamine dehydratase (118 aa).

The protein belongs to the pterin-4-alpha-carbinolamine dehydratase family.

The enzyme catalyses (4aS,6R)-4a-hydroxy-L-erythro-5,6,7,8-tetrahydrobiopterin = (6R)-L-erythro-6,7-dihydrobiopterin + H2O. The sequence is that of Putative pterin-4-alpha-carbinolamine dehydratase from Pseudomonas fluorescens (strain SBW25).